The following is a 388-amino-acid chain: Chorismate synthase (388 aa).

NADP(+) is bound by residues R39 and R45. FMN contacts are provided by residues R130 to S132, N251 to A252, G296, K311 to T315, and R337.

The protein belongs to the chorismate synthase family. Homotetramer. The cofactor is FMNH2.

The catalysed reaction is 5-O-(1-carboxyvinyl)-3-phosphoshikimate = chorismate + phosphate. It functions in the pathway metabolic intermediate biosynthesis; chorismate biosynthesis; chorismate from D-erythrose 4-phosphate and phosphoenolpyruvate: step 7/7. Its function is as follows. Catalyzes the anti-1,4-elimination of the C-3 phosphate and the C-6 proR hydrogen from 5-enolpyruvylshikimate-3-phosphate (EPSP) to yield chorismate, which is the branch point compound that serves as the starting substrate for the three terminal pathways of aromatic amino acid biosynthesis. This reaction introduces a second double bond into the aromatic ring system. In Geobacillus thermodenitrificans (strain NG80-2), this protein is Chorismate synthase.